A 228-amino-acid chain; its full sequence is Cytidylate kinase (228 aa).

An ATP-binding site is contributed by Gly-11–Ser-19.

It belongs to the cytidylate kinase family. Type 1 subfamily.

It localises to the cytoplasm. It carries out the reaction CMP + ATP = CDP + ADP. It catalyses the reaction dCMP + ATP = dCDP + ADP. The sequence is that of Cytidylate kinase from Mycobacterium avium (strain 104).